A 251-amino-acid chain; its full sequence is ATP synthase subunit a (251 aa).

Transmembrane regions (helical) follow at residues Asn-30–Leu-50, Phe-86–Phe-106, Ile-116–Trp-136, Phe-145–Val-165, Phe-195–Leu-215, and Ile-219–Leu-239.

The protein belongs to the ATPase A chain family. In terms of assembly, F-type ATPases have 2 components, CF(1) - the catalytic core - and CF(0) - the membrane proton channel. CF(1) has five subunits: alpha(3), beta(3), gamma(1), delta(1), epsilon(1). CF(0) has three main subunits: a(1), b(2) and c(9-12). The alpha and beta chains form an alternating ring which encloses part of the gamma chain. CF(1) is attached to CF(0) by a central stalk formed by the gamma and epsilon chains, while a peripheral stalk is formed by the delta and b chains.

The protein localises to the cell inner membrane. Key component of the proton channel; it plays a direct role in the translocation of protons across the membrane. The chain is ATP synthase subunit a from Acidiphilium cryptum (strain JF-5).